The primary structure comprises 431 residues: Serine--tRNA ligase (431 aa).

The segment at Gln41–Glu66 is disordered. Residue Thr240 to Glu242 participates in L-serine binding. Arg271–Glu273 provides a ligand contact to ATP. Glu294 contributes to the L-serine binding site. Residue Glu358 to Ser361 coordinates ATP. Residue Ser392 participates in L-serine binding.

It belongs to the class-II aminoacyl-tRNA synthetase family. Type-1 seryl-tRNA synthetase subfamily. As to quaternary structure, homodimer. The tRNA molecule binds across the dimer.

It localises to the cytoplasm. It carries out the reaction tRNA(Ser) + L-serine + ATP = L-seryl-tRNA(Ser) + AMP + diphosphate + H(+). The enzyme catalyses tRNA(Sec) + L-serine + ATP = L-seryl-tRNA(Sec) + AMP + diphosphate + H(+). The protein operates within aminoacyl-tRNA biosynthesis; selenocysteinyl-tRNA(Sec) biosynthesis; L-seryl-tRNA(Sec) from L-serine and tRNA(Sec): step 1/1. Catalyzes the attachment of serine to tRNA(Ser). Is also able to aminoacylate tRNA(Sec) with serine, to form the misacylated tRNA L-seryl-tRNA(Sec), which will be further converted into selenocysteinyl-tRNA(Sec). This is Serine--tRNA ligase from Aeromonas salmonicida (strain A449).